The following is a 244-amino-acid chain: NAD(P)H-quinone oxidoreductase subunit K (244 aa).

C60, C61, C125, and C156 together coordinate [4Fe-4S] cluster.

It belongs to the complex I 20 kDa subunit family. In terms of assembly, NDH-1 can be composed of about 15 different subunits; different subcomplexes with different compositions have been identified which probably have different functions. The cofactor is [4Fe-4S] cluster.

It localises to the cellular thylakoid membrane. It carries out the reaction a plastoquinone + NADH + (n+1) H(+)(in) = a plastoquinol + NAD(+) + n H(+)(out). The enzyme catalyses a plastoquinone + NADPH + (n+1) H(+)(in) = a plastoquinol + NADP(+) + n H(+)(out). In terms of biological role, NDH-1 shuttles electrons from an unknown electron donor, via FMN and iron-sulfur (Fe-S) centers, to quinones in the respiratory and/or the photosynthetic chain. The immediate electron acceptor for the enzyme in this species is believed to be plastoquinone. Couples the redox reaction to proton translocation, and thus conserves the redox energy in a proton gradient. Cyanobacterial NDH-1 also plays a role in inorganic carbon-concentration. This Prochlorococcus marinus (strain AS9601) protein is NAD(P)H-quinone oxidoreductase subunit K.